Consider the following 393-residue polypeptide: Lysophosphatidic acid receptor 1 (393 aa).

Over 1-50 the chain is Extracellular; it reads MAAASTSSPVVSQPQFTAMNEPQCFYNESIAFFYNRSGKYLATEWNTVSK. Intrachain disulfides connect cysteine 24/cysteine 190 and cysteine 188/cysteine 195. Residues asparagine 27 and asparagine 35 are each glycosylated (N-linked (GlcNAc...) asparagine). Lysine 39 is a binding site for a 1-acyl-sn-glycero-3-phosphate. The helical transmembrane segment at 51 to 75 threads the bilayer; the sequence is LVMGLGITVCIFIMLANLLVMVAIY. Over 76 to 83 the chain is Cytoplasmic; it reads VNRRFHFP. Residues 84 to 107 form a helical membrane-spanning segment; that stretch reads IYYLMANLAAADFFAGLAYFYLMF. At 108 to 121 the chain is on the extracellular side; the sequence is NTGPNTRRLTVSTW. The helical transmembrane segment at 122–144 threads the bilayer; the sequence is LLRQGLIDTTVTASVANLLAIAI. 124–129 provides a ligand contact to a 1-acyl-sn-glycero-3-phosphate; that stretch reads RQGLID. Residues 145–163 are Cytoplasmic-facing; the sequence is ERHITVFRMQLHTRMSNRR. A helical membrane pass occupies residues 164–184; the sequence is VVVVIVVIWTMAIVMGAIPSV. Residues 185-204 lie on the Extracellular side of the membrane; the sequence is GWNCICDIENCSNMAPLYSD. A helical membrane pass occupies residues 205-225; that stretch reads SYLVFWAIFNLVTFVVMVVLY. Tryptophan 210 contacts a 1-acyl-sn-glycero-3-phosphate. Over 226–255 the chain is Cytoplasmic; it reads AHIFGYVRQRTMRMSRHSSGPRRNRDTMMS. Residues 256-280 form a helical membrane-spanning segment; it reads LLKTVVIVLGAFIICWTPGLVLLLL. At 281-294 the chain is on the extracellular side; the sequence is DVCCPQCDVLAYEK. Residues cysteine 284 and cysteine 287 are joined by a disulfide bond. Residues 295–315 form a helical membrane-spanning segment; that stretch reads FFLLLAEFNSAMNPIIYSYRD. Over 316 to 393 the chain is Cytoplasmic; the sequence is KEMSATFRQI…PPERPGQGRV (78 aa). Phosphoserine is present on serine 341. Threonine 351 bears the Phosphothreonine mark. The segment covering 369-381 has biased composition (basic and acidic residues); it reads KMRGGHHLLRDEQ. The segment at 369–393 is disordered; it reads KMRGGHHLLRDEQPPPPERPGQGRV.

Belongs to the G-protein coupled receptor 1 family. As to quaternary structure, interacts with RALA and GRK2. Interacts with GNAQ and GNA13. Interacts with CD14; the interaction is enhanced by exposure to bacterial lipopolysaccharide (LPS). In terms of processing, N-glycosylated. In terms of tissue distribution, detected in brain cortex and in pituitary pars tuberalis.

Its subcellular location is the cell surface. It is found in the cell membrane. The protein localises to the endosome. Its function is as follows. Receptor for lysophosphatidic acid (LPA). Plays a role in the reorganization of the actin cytoskeleton, cell migration, differentiation and proliferation, and thereby contributes to the responses to tissue damage and infectious agents. Activates downstream signaling cascades via the G(i)/G(o), G(12)/G(13), and G(q) families of heteromeric G proteins. Signaling inhibits adenylyl cyclase activity and decreases cellular cAMP levels. Signaling triggers an increase of cytoplasmic Ca(2+) levels. Activates RALA; this leads to the activation of phospholipase C (PLC) and the formation of inositol 1,4,5-trisphosphate. Signaling mediates activation of down-stream MAP kinases. Contributes to the regulation of cell shape. Promotes Rho-dependent reorganization of the actin cytoskeleton in neuronal cells and neurite retraction. Promotes the activation of Rho and the formation of actin stress fibers. Promotes formation of lamellipodia at the leading edge of migrating cells via activation of RAC1. Through its function as LPA receptor, plays a role in chemotaxis and cell migration, including responses to injury and wounding. Plays a role in triggering inflammation in response to bacterial lipopolysaccharide (LPS) via its interaction with CD14. Promotes cell proliferation in response to LPA. Inhibits the intracellular ciliogenesis pathway in response to LPA and through AKT1 activation. Required for normal skeleton development. May play a role in osteoblast differentiation. Required for normal brain development. Required for normal proliferation, survival and maturation of newly formed neurons in the adult dentate gyrus. Plays a role in pain perception and in the initiation of neuropathic pain. The chain is Lysophosphatidic acid receptor 1 (LPAR1) from Ovis aries (Sheep).